A 347-amino-acid chain; its full sequence is UDP-N-acetylenolpyruvoylglucosamine reductase (347 aa).

Residues 24–195 enclose the FAD-binding PCMH-type domain; the sequence is FDARARVAAR…VAVTFRLPKA (172 aa). Arginine 171 is a catalytic residue. Serine 247 acts as the Proton donor in catalysis. Glutamate 343 is an active-site residue.

This sequence belongs to the MurB family. The cofactor is FAD.

It is found in the cytoplasm. It carries out the reaction UDP-N-acetyl-alpha-D-muramate + NADP(+) = UDP-N-acetyl-3-O-(1-carboxyvinyl)-alpha-D-glucosamine + NADPH + H(+). It participates in cell wall biogenesis; peptidoglycan biosynthesis. In terms of biological role, cell wall formation. This is UDP-N-acetylenolpyruvoylglucosamine reductase from Burkholderia pseudomallei (strain 668).